A 444-amino-acid chain; its full sequence is Ribosomal protein uS12 methylthiotransferase RimO (444 aa).

The MTTase N-terminal domain maps to 3-119 (IKIGLVSLGC…IARAVRRVLE (117 aa)). Residues Cys-12, Cys-48, Cys-82, Cys-156, Cys-160, and Cys-163 each coordinate [4Fe-4S] cluster. The 231-residue stretch at 142-372 (ATPPYTAYLK…MMLQQEISLQ (231 aa)) folds into the Radical SAM core domain. In terms of domain architecture, TRAM spans 375 to 444 (LKRVGEVIEV…EYDLTGETVL (70 aa)).

This sequence belongs to the methylthiotransferase family. RimO subfamily. It depends on [4Fe-4S] cluster as a cofactor.

The protein resides in the cytoplasm. It catalyses the reaction L-aspartate(89)-[ribosomal protein uS12]-hydrogen + (sulfur carrier)-SH + AH2 + 2 S-adenosyl-L-methionine = 3-methylsulfanyl-L-aspartate(89)-[ribosomal protein uS12]-hydrogen + (sulfur carrier)-H + 5'-deoxyadenosine + L-methionine + A + S-adenosyl-L-homocysteine + 2 H(+). Functionally, catalyzes the methylthiolation of an aspartic acid residue of ribosomal protein uS12. The polypeptide is Ribosomal protein uS12 methylthiotransferase RimO (Pelotomaculum thermopropionicum (strain DSM 13744 / JCM 10971 / SI)).